A 282-amino-acid polypeptide reads, in one-letter code: Pantothenate synthetase (282 aa).

ATP is bound at residue 30 to 37 (MGYLHEGH). The active-site Proton donor is His-37. Gln-61 serves as a coordination point for (R)-pantoate. A beta-alanine-binding site is contributed by Gln-61. 147-150 (GMKD) provides a ligand contact to ATP. Gln-153 contacts (R)-pantoate. ATP is bound by residues Val-176 and 184 to 187 (KSSR).

Belongs to the pantothenate synthetase family. Homodimer.

It is found in the cytoplasm. The enzyme catalyses (R)-pantoate + beta-alanine + ATP = (R)-pantothenate + AMP + diphosphate + H(+). Its pathway is cofactor biosynthesis; (R)-pantothenate biosynthesis; (R)-pantothenate from (R)-pantoate and beta-alanine: step 1/1. Functionally, catalyzes the condensation of pantoate with beta-alanine in an ATP-dependent reaction via a pantoyl-adenylate intermediate. The polypeptide is Pantothenate synthetase (Bacillus anthracis (strain A0248)).